The sequence spans 358 residues: Na(+)/H(+) exchange regulatory cofactor NHE-RF1 (358 aa).

An N-acetylserine modification is found at serine 2. Serine 2 and serine 46 each carry phosphoserine. A PDZ 1 domain is found at 14–94; sequence LCCLEKGPNG…AVRLLVVDPD (81 aa). A compositionally biased stretch (low complexity) spans 114–134; that stretch reads QAGPEQAGPPAAPGEQGPAGE. The segment at 114–151 is disordered; it reads QAGPEQAGPPAAPGEQGPAGENEPREVEKSHPERRELR. Residues 135–151 show a composition bias toward basic and acidic residues; sequence NEPREVEKSHPERRELR. The 81-residue stretch at 154–234 folds into the PDZ 2 domain; that stretch reads LCAMKKGPNG…EAKLLVVDKE (81 aa). A disordered region spans residues 247-358; the sequence is SSEHLNGPLP…SEKKELFSNL (112 aa). Over residues 272-290 the composition is skewed to low complexity; sequence LAPAASESPRPALARSASS. 3 positions are modified to phosphoserine: serine 279, serine 289, and serine 290. Residue threonine 292 is modified to Phosphothreonine. Residues serine 293, serine 298, and serine 301 each carry the phosphoserine modification. Positions 308–327 are enriched in low complexity; it reads TAPSSTSSSSDPILDFSISL. A compositionally biased stretch (basic and acidic residues) spans 348 to 358; it reads WSEKKELFSNL.

As to quaternary structure, homodimer, and heterodimer with NHERF2. Binds the N-termini of EZR, RDX and MSN. Binds the C-termini of PDGFRA, PDGFRB, ADRB2, NOS2 and CFTR. Binds ARHGAP17, EPI64, RACK1, OPRK1, GNAQ, CTNNB1 and PLCB3. Binds PDZK1. Interacts with CLCN3. Binds the C-terminus of PAG1. In resting T-cells, part of a PAG1-NHERF1-MSN complex which is disrupted upon TCR activation. Forms a complex with CFTR and SLC4A7. Forms a complex with SLC4A7 and ATP6V1B1. Interacts with TRPC4 (via the PDZ-binding domain). Directly interacts with HTR4. Interacts (via the PDZ 1 domain) with PODXL (via the C-terminal PDZ-binding motif DTHL); interaction is not detected in glomerular epithelium cells. Interacts (via the PDZ 1 domain) with PODXL (via the C-terminal PDZ-binding motif DTHL); the interaction take place early in the secretory pathway and is necessary for its apical membrane sorting. Interacts with SLC26A3. Interacts with MCC. Interacts with SLC34A1. Interacts (via the PDZ domains) with SLC26A6 isoform 4 and isoform 5. Interacts (via PDZ domains) with ACE2 (via PDZ-binding motif); the interaction may enhance ACE2 membrane residence. Post-translationally, phosphorylated on serine residues. In terms of tissue distribution, detected in ileum, duodenum and in kidney, where it is found in the glomerulus, the proximal tubule, the thick ascending limb of Henle's loop and the cortical collecting duct.

It is found in the cytoplasm. The protein resides in the apical cell membrane. The protein localises to the cell projection. It localises to the filopodium. Its subcellular location is the ruffle. It is found in the microvillus. The protein resides in the endomembrane system. In terms of biological role, scaffold protein that connects plasma membrane proteins with members of the ezrin/moesin/radixin family and thereby helps to link them to the actin cytoskeleton and to regulate their surface expression. Necessary for recycling of internalized ADRB2. Was first known to play a role in the regulation of the activity and subcellular location of SLC9A3. Necessary for cAMP-mediated phosphorylation and inhibition of SLC9A3. Involved in sperm capacitation. May participate in the regulation of the chloride and bicarbonate homeostasis in spermatozoa. May enhance Wnt signaling. May participate in HTR4 targeting to microvilli. Involved in the regulation of phosphate reabsorption in the renal proximal tubules. This is Na(+)/H(+) exchange regulatory cofactor NHE-RF1 (NHERF1) from Oryctolagus cuniculus (Rabbit).